The following is an 884-amino-acid chain: Translation initiation factor IF-2 (884 aa).

Positions 58 to 248 are disordered; the sequence is PEKVEQKRVR…GKTESVETEE (191 aa). Basic residues predominate over residues 66 to 77; it reads VRSNVIRKRRQP. Over residues 87–106 the composition is skewed to low complexity; sequence EAPAAQAPEAEEVTAPTAEE. The segment covering 172–183 has biased composition (basic residues); the sequence is SRKKAKAKKHQA. A compositionally biased stretch (low complexity) spans 207-223; sequence DTAPADSPAAPAAATPA. A compositionally biased stretch (basic residues) spans 229–239; the sequence is KPSRKDRKKRG. The tr-type G domain occupies 384 to 553; that stretch reads KRAPVVTIMG…LLQAEMLELK (170 aa). The segment at 393–400 is G1; the sequence is GHVDHGKT. Residue 393-400 coordinates GTP; sequence GHVDHGKT. Residues 418 to 422 form a G2 region; the sequence is GITQH. The interval 439–442 is G3; it reads DTPG. GTP-binding positions include 439 to 443 and 493 to 496; these read DTPGH and NKID. The G4 stretch occupies residues 493-496; that stretch reads NKID. The tract at residues 529 to 531 is G5; that stretch reads SAK.

It belongs to the TRAFAC class translation factor GTPase superfamily. Classic translation factor GTPase family. IF-2 subfamily.

The protein resides in the cytoplasm. Its function is as follows. One of the essential components for the initiation of protein synthesis. Protects formylmethionyl-tRNA from spontaneous hydrolysis and promotes its binding to the 30S ribosomal subunits. Also involved in the hydrolysis of GTP during the formation of the 70S ribosomal complex. The polypeptide is Translation initiation factor IF-2 (Desulfosudis oleivorans (strain DSM 6200 / JCM 39069 / Hxd3) (Desulfococcus oleovorans)).